The primary structure comprises 764 residues: MIQTLKTDSSFRLCFAAIAFGFVFIMNGKLSSGTTPHEFPVYIFYLGERKHDDPNLVTQSHLEILKSVLGSEEATNKSMVYSYHHGFSGFAAKLKPAEAEKLKKHPEVIILLENRKLGLQTTRTWDYLGQFSTPTSSKSLLHETNMGSGAIIGVIDSGIWSESGSFDDDGYGPIPKHWKGQCVSADQFSPADCNKKLIGAKYYIDGLNADLETSINSTTEYLSPRDHNGHGTQVSSTAAGSFVSNMTLLGLSSGSIMRGGAPKAHIAMYKACWDVEGGMCSVADVWKAFDEAIHDGVDVLSVSVGGSALKTLDVEIDIAIPALHAVNKGIPVVSPAGNEGSRSSSVINVSPWILTVAATTLDRSFSTLITLENNKTYLGQSLYTGPEISFTDVICTGDHSNVDQITKGKVIMHFSMGPVRPLTPDVVQKNGGIGLIYVRNPGDSRVECPVNFPCIYLDMEVGSELYTYIQTRSSMKIKISPYKTIIGESVASKVAKSSARGPSSFSPAILKPDIAAPGLTLLTPRIPTDEDTREFVYSGTSMATPVIAGIVALLKISHPNWSPAVIKSALVTTAMKTDPYGERLTVDGGNYKVADAFDYGGGLVNLEKATDPGLVYDMDINDYTHYLCSQTLYTDKKVSALTGNVNNKCPSSSSSILDLNVPSITIPDLKGTVNVTRTVTNVGRVKSVYKPVIEAPFGFNVVVSPKKLKFNKTRNKLAFTVTVSPGSHRVNTAFYFGSLTWSDKVHNVTIPISLRTRFIDNFFL.

The signal sequence occupies residues Met-1–Ser-32. The propeptide at Gly-33 to Gln-120 is activation peptide. One can recognise an Inhibitor I9 domain in the interval Val-41–Lys-116. Asn-76 is a glycosylation site (N-linked (GlcNAc...) asparagine). Residues Thr-124 to Thr-610 enclose the Peptidase S8 domain. Residue Asp-156 is the Charge relay system of the active site. Residue Asn-216 is glycosylated (N-linked (GlcNAc...) asparagine). The active-site Charge relay system is His-230. N-linked (GlcNAc...) asparagine glycans are attached at residues Asn-245 and Asn-374. Ser-541 acts as the Charge relay system in catalysis. 3 N-linked (GlcNAc...) asparagine glycosylation sites follow: Asn-674, Asn-711, and Asn-747.

It belongs to the peptidase S8 family.

Its subcellular location is the secreted. The polypeptide is Subtilisin-like protease SBT3.1 (Arabidopsis thaliana (Mouse-ear cress)).